A 126-amino-acid polypeptide reads, in one-letter code: Aspartate 1-decarboxylase (126 aa).

Ser25 acts as the Schiff-base intermediate with substrate; via pyruvic acid in catalysis. Pyruvic acid (Ser) is present on Ser25. A substrate-binding site is contributed by Thr57. Catalysis depends on Tyr58, which acts as the Proton donor. 73 to 75 (GAA) contributes to the substrate binding site.

It belongs to the PanD family. In terms of assembly, heterooctamer of four alpha and four beta subunits. Requires pyruvate as cofactor. Post-translationally, is synthesized initially as an inactive proenzyme, which is activated by self-cleavage at a specific serine bond to produce a beta-subunit with a hydroxyl group at its C-terminus and an alpha-subunit with a pyruvoyl group at its N-terminus.

It localises to the cytoplasm. The catalysed reaction is L-aspartate + H(+) = beta-alanine + CO2. It functions in the pathway cofactor biosynthesis; (R)-pantothenate biosynthesis; beta-alanine from L-aspartate: step 1/1. Functionally, catalyzes the pyruvoyl-dependent decarboxylation of aspartate to produce beta-alanine. In Pseudomonas aeruginosa (strain LESB58), this protein is Aspartate 1-decarboxylase.